The primary structure comprises 139 residues: Small integral membrane protein 34 (139 aa).

The chain crosses the membrane as a helical span at residues 46 to 66 (GTSAAWYILTIIGIYAVIFVF).

Its subcellular location is the membrane. The chain is Small integral membrane protein 34 from Homo sapiens (Human).